We begin with the raw amino-acid sequence, 501 residues long: ATP synthase subunit alpha (501 aa).

169 to 176 serves as a coordination point for ATP; the sequence is GDRQTGKT.

Belongs to the ATPase alpha/beta chains family. In terms of assembly, F-type ATPases have 2 components, CF(1) - the catalytic core - and CF(0) - the membrane proton channel. CF(1) has five subunits: alpha(3), beta(3), gamma(1), delta(1), epsilon(1). CF(0) has three main subunits: a(1), b(2) and c(9-12). The alpha and beta chains form an alternating ring which encloses part of the gamma chain. CF(1) is attached to CF(0) by a central stalk formed by the gamma and epsilon chains, while a peripheral stalk is formed by the delta and b chains.

The protein resides in the cell membrane. The enzyme catalyses ATP + H2O + 4 H(+)(in) = ADP + phosphate + 5 H(+)(out). Its function is as follows. Produces ATP from ADP in the presence of a proton gradient across the membrane. The alpha chain is a regulatory subunit. This is ATP synthase subunit alpha from Streptococcus agalactiae serotype III (strain NEM316).